The following is a 359-amino-acid chain: Lachesin (359 aa).

Residues 1–25 form the signal peptide; it reads MWRPSISNCVWSTLLLAIFVQQTLA. The Ig-like V-type domain maps to 29–130; that stretch reads PTISYITQEQ…HKVSAEVKLS (102 aa). Cysteine 50 and cysteine 113 are disulfide-bonded. Residues asparagine 92 and asparagine 140 are each glycosylated (N-linked (GlcNAc...) asparagine). 2 consecutive Ig-like C2-type domains span residues 135–221 and 226–317; these read PVIS…INVE and PVIT…ARVN. Intrachain disulfides connect cysteine 157/cysteine 204 and cysteine 247/cysteine 303. Residue alanine 336 is the site of GPI-anchor amidated alanine attachment. The propeptide at 337–359 is removed in mature form; sequence GAEDVSATSFALVGILAALLFAR.

In terms of tissue distribution, expressed on differentiating neuronal cells from the onset of neurogenesis in both the central and peripheral nervous systems. First detected in the cellularized blastoderm, apart from in the ventral side. Expression persists uniformly in the early ectoderm until the end of gastrulation. From stage 10, expressed in an alternating strong/weak pattern in each segment until stage 15 when it disappears. From stage 11, expressed in subsets of neurons and later subsets of glial cells. From early stage 13, strongly expressed in trachea, hindgut, foregut and the nervous system.

It localises to the cell membrane. Its function is as follows. Required for normal tracheal development and maintenance of the trans-epithelial diffusion barrier. Functions as a homophilic cell-adhesion molecule. May play a role in early neuronal differentiation and axon outgrowth. The polypeptide is Lachesin (Lac) (Drosophila melanogaster (Fruit fly)).